A 78-amino-acid polypeptide reads, in one-letter code: Putative protein PeaD (78 aa).

This sequence belongs to the phage P protein family.

The protein is Putative protein PeaD (peaD) of Escherichia coli (strain K12).